The following is a 363-amino-acid chain: Aminomethyltransferase (363 aa).

This sequence belongs to the GcvT family. In terms of assembly, the glycine cleavage system is composed of four proteins: P, T, L and H.

It catalyses the reaction N(6)-[(R)-S(8)-aminomethyldihydrolipoyl]-L-lysyl-[protein] + (6S)-5,6,7,8-tetrahydrofolate = N(6)-[(R)-dihydrolipoyl]-L-lysyl-[protein] + (6R)-5,10-methylene-5,6,7,8-tetrahydrofolate + NH4(+). Functionally, the glycine cleavage system catalyzes the degradation of glycine. The sequence is that of Aminomethyltransferase from Staphylococcus aureus (strain N315).